The primary structure comprises 357 residues: Magnesium-chelatase subunit ChlI (357 aa).

47 to 54 (GDRGTGKS) is an ATP binding site.

Belongs to the Mg-chelatase subunits D/I family.

The catalysed reaction is protoporphyrin IX + Mg(2+) + ATP + H2O = Mg-protoporphyrin IX + ADP + phosphate + 3 H(+). Its pathway is porphyrin-containing compound metabolism; chlorophyll biosynthesis. Functionally, involved in chlorophyll biosynthesis; introduces a magnesium ion into protoporphyrin IX to yield Mg-protoporphyrin IX. This chain is Magnesium-chelatase subunit ChlI (chlI), found in Synechocystis sp. (strain ATCC 27184 / PCC 6803 / Kazusa).